A 310-amino-acid polypeptide reads, in one-letter code: Malate dehydrogenase (310 aa).

NAD(+) contacts are provided by residues 7–12 (GAGNVG) and Asp-32. Substrate is bound by residues Arg-81 and Arg-87. NAD(+) is bound by residues Asn-94 and 117–119 (VSN). Residues Asn-119 and Arg-150 each coordinate substrate. The active-site Proton acceptor is His-174.

It belongs to the LDH/MDH superfamily. MDH type 3 family.

It carries out the reaction (S)-malate + NAD(+) = oxaloacetate + NADH + H(+). Catalyzes the reversible oxidation of malate to oxaloacetate. In Chlorobium phaeobacteroides (strain DSM 266 / SMG 266 / 2430), this protein is Malate dehydrogenase.